The sequence spans 274 residues: MSLQNDIITALGVKSSIDPAQEIRVSVDFLKNYLNAHPFITSLVLGISGGQDSTLTGKLCQTAITELRNETGTSRYQFIAVRLPYGVQADEADCQDAIAFIQPDRVLTVNIKPAIESSEATLRAIGVELSDFVKGNEKARERMKAQYSIAGMNAGLVVGTDHAAEAVTGFFTKYGDGGTDINPIFRLNKRQGKALLRELGCPSHLYTKAPTADLEEDRPSLPDEVALGVTYEKIDDYLEGKPIDANDAATIENWYRKTEHKRRPPITVFDDFWQ.

Position 46–53 (46–53 (GISGGQDS)) interacts with ATP. Aspartate 52 provides a ligand contact to Mg(2+). Arginine 140 is a binding site for deamido-NAD(+). Position 160 (threonine 160) interacts with ATP. Glutamate 165 is a binding site for Mg(2+). Deamido-NAD(+)-binding residues include lysine 173 and aspartate 180. 2 residues coordinate ATP: lysine 189 and threonine 211. Residue 260–261 (HK) coordinates deamido-NAD(+).

This sequence belongs to the NAD synthetase family. In terms of assembly, homodimer.

It catalyses the reaction deamido-NAD(+) + NH4(+) + ATP = AMP + diphosphate + NAD(+) + H(+). The protein operates within cofactor biosynthesis; NAD(+) biosynthesis; NAD(+) from deamido-NAD(+) (ammonia route): step 1/1. Catalyzes the ATP-dependent amidation of deamido-NAD to form NAD. Uses ammonia as a nitrogen source. The polypeptide is NH(3)-dependent NAD(+) synthetase (Pectobacterium atrosepticum (strain SCRI 1043 / ATCC BAA-672) (Erwinia carotovora subsp. atroseptica)).